Reading from the N-terminus, the 1044-residue chain is Elongation factor 3B (1044 aa).

An N-acetylserine modification is found at S2. Residues 5–42 (QQSITVLEELFRKLETATSETREGISSELSSFLNGNII) form an HEAT 1 repeat. ADP is bound by residues I42, H44, and S83. HEAT repeat units follow at residues 86-123 (PYIV…AVNP), 124-162 (VAVK…AAKE), 166-203 (LRMP…TVDN), 205-241 (DIER…EVTP), 242-279 (ATLS…LVED), and 285-323 (PFLG…VGNV). N6,N6,N6-trimethyllysine occurs at positions 187 and 196. 3 residues coordinate ADP: T392, H396, and E397. ABC transporter domains lie at 426–641 (DEGE…YYEL) and 667–993 (VKVS…KKEE). An ADP-binding site is contributed by N703. At K789 the chain carries N6,N6,N6-trimethyllysine. Positions 922, 925, and 951 each coordinate ADP. Position 972 is a phosphothreonine (T972). The residue at position 974 (S974) is a Phosphoserine. Residues 975–1044 (GHNWVAGQGA…DEYVSSDEDF (70 aa)) form a disordered region. Over residues 987–999 (RIEKKEEEGDKFD) the composition is skewed to basic and acidic residues. Residues 1020 to 1031 (RKKKKERMKKKK) show a composition bias toward basic residues. Phosphoserine is present on residues S1039 and S1040.

Belongs to the ABC transporter superfamily. ABCF family. EF3 subfamily. In terms of assembly, monomer.

The protein resides in the cytoplasm. The enzyme catalyses ATP + H2O = ADP + phosphate + H(+). The protein operates within protein biosynthesis; polypeptide chain elongation. In terms of biological role, ribosome-dependent ATPase that promotes the translation of proteins required for detoxification of reactive oxygen species. Required for the ATP-dependent release of deacylated tRNA from the ribosomal E-site during protein biosynthesis. Stimulates the eEF1A-dependent binding of aminoacyl-tRNA to the ribosomal A-site, which has reduced affinity for tRNA as long as the E-site is occupied. Assists translation termination by stimulating the release of nascent protein from the ribosome by release factors. The chain is Elongation factor 3B from Saccharomyces cerevisiae (strain ATCC 204508 / S288c) (Baker's yeast).